The primary structure comprises 92 residues: Small ribosomal subunit protein uS19c (92 aa).

The protein belongs to the universal ribosomal protein uS19 family.

It localises to the plastid. Its subcellular location is the chloroplast. Its function is as follows. Protein S19 forms a complex with S13 that binds strongly to the 16S ribosomal RNA. This chain is Small ribosomal subunit protein uS19c, found in Gossypium barbadense (Sea Island cotton).